The sequence spans 339 residues: 5-dehydro-2-deoxygluconokinase (339 aa).

It belongs to the carbohydrate kinase PfkB family.

The catalysed reaction is 5-dehydro-2-deoxy-D-gluconate + ATP = 6-phospho-5-dehydro-2-deoxy-D-gluconate + ADP + H(+). Its pathway is polyol metabolism; myo-inositol degradation into acetyl-CoA; acetyl-CoA from myo-inositol: step 5/7. Its function is as follows. Catalyzes the phosphorylation of 5-dehydro-2-deoxy-D-gluconate (2-deoxy-5-keto-D-gluconate or DKG) to 6-phospho-5-dehydro-2-deoxy-D-gluconate (DKGP). The protein is 5-dehydro-2-deoxygluconokinase of Clostridium botulinum (strain Eklund 17B / Type B).